A 478-amino-acid polypeptide reads, in one-letter code: Phosphomannomutase (478 aa).

Residues 30 to 46 traverse the membrane as a helical segment; that stretch reads FTPEVCARFTISFLTVM. Ser-111 acts as the Phosphoserine intermediate in catalysis. The Mg(2+) site is built by Ser-111, Asp-245, Asp-247, and Asp-249. A helical membrane pass occupies residues 265 to 284; that stretch reads ILGLLCSLELAADAVAIPVS.

Belongs to the phosphohexose mutase family. Mg(2+) is required as a cofactor.

The protein resides in the cell membrane. The enzyme catalyses alpha-D-mannose 1-phosphate = D-mannose 6-phosphate. Its pathway is nucleotide-sugar biosynthesis; GDP-alpha-D-mannose biosynthesis; alpha-D-mannose 1-phosphate from D-fructose 6-phosphate: step 2/2. It participates in bacterial outer membrane biogenesis; LPS O-antigen biosynthesis. Its function is as follows. Involved in GDP-mannose biosynthesis which serves as the activated sugar nucleotide precursor for mannose residues in cell surface polysaccharides. This enzyme participates in synthesis of the LPS group C2 O antigen. The sequence is that of Phosphomannomutase (manB) from Salmonella muenchen.